Here is a 284-residue protein sequence, read N- to C-terminus: RNase adapter protein RapZ (284 aa).

Residue 8–15 (GRSGSGKS) participates in ATP binding. 56–59 (DVRN) contacts GTP. Residues 266-284 (RSRGKNVQSRHRTLEKRKT) are RNA-binding.

Belongs to the RapZ-like family. RapZ subfamily. As to quaternary structure, homotrimer.

Functionally, modulates the synthesis of GlmS, by affecting the processing and stability of the regulatory small RNA GlmZ. When glucosamine-6-phosphate (GlcN6P) concentrations are high in the cell, RapZ binds GlmZ and targets it to cleavage by RNase E. Consequently, GlmZ is inactivated and unable to activate GlmS synthesis. Under low GlcN6P concentrations, RapZ is sequestered and inactivated by an other regulatory small RNA, GlmY, preventing GlmZ degradation and leading to synthesis of GlmS. This chain is RNase adapter protein RapZ, found in Escherichia fergusonii (strain ATCC 35469 / DSM 13698 / CCUG 18766 / IAM 14443 / JCM 21226 / LMG 7866 / NBRC 102419 / NCTC 12128 / CDC 0568-73).